The sequence spans 158 residues: 6,7-dimethyl-8-ribityllumazine synthase (158 aa).

5-amino-6-(D-ribitylamino)uracil contacts are provided by residues F18, 50–52 (SYD), and 74–76 (AVI). Position 79–80 (79–80 (ET)) interacts with (2S)-2-hydroxy-3-oxobutyl phosphate. The Proton donor role is filled by H82. L107 provides a ligand contact to 5-amino-6-(D-ribitylamino)uracil. R122 serves as a coordination point for (2S)-2-hydroxy-3-oxobutyl phosphate.

It belongs to the DMRL synthase family.

It catalyses the reaction (2S)-2-hydroxy-3-oxobutyl phosphate + 5-amino-6-(D-ribitylamino)uracil = 6,7-dimethyl-8-(1-D-ribityl)lumazine + phosphate + 2 H2O + H(+). Its pathway is cofactor biosynthesis; riboflavin biosynthesis; riboflavin from 2-hydroxy-3-oxobutyl phosphate and 5-amino-6-(D-ribitylamino)uracil: step 1/2. Catalyzes the formation of 6,7-dimethyl-8-ribityllumazine by condensation of 5-amino-6-(D-ribitylamino)uracil with 3,4-dihydroxy-2-butanone 4-phosphate. This is the penultimate step in the biosynthesis of riboflavin. This Sulfolobus acidocaldarius (strain ATCC 33909 / DSM 639 / JCM 8929 / NBRC 15157 / NCIMB 11770) protein is 6,7-dimethyl-8-ribityllumazine synthase.